The following is a 476-amino-acid chain: Probable serine carboxypeptidase CPVL (476 aa).

The signal sequence occupies residues 1–22 (MVGAMWKVIVSLVLLMPGPCDG). Asparagine 81 and asparagine 132 each carry an N-linked (GlcNAc...) asparagine glycan. Residue serine 204 is part of the active site. N-linked (GlcNAc...) asparagine glycans are attached at residues asparagine 307 and asparagine 346. Catalysis depends on residues aspartate 388 and histidine 448.

It belongs to the peptidase S10 family. In terms of tissue distribution, expressed in macrophages but not in other leukocytes. Abundantly expressed in heart and kidney. Also expressed in spleen, leukocytes, and placenta.

Its function is as follows. May be involved in the digestion of phagocytosed particles in the lysosome, participation in an inflammatory protease cascade, and trimming of peptides for antigen presentation. This Homo sapiens (Human) protein is Probable serine carboxypeptidase CPVL (CPVL).